Reading from the N-terminus, the 215-residue chain is Cytochrome b6 (215 aa).

Residues 32–52 (IFHCLGGITLTCFLVQVATGF) traverse the membrane as a helical segment. Residue Cys35 coordinates heme c. Residues His86 and His100 each contribute to the heme b site. 3 consecutive transmembrane segments (helical) span residues 90–110 (ASMM…TGGF), 116–136 (LTWV…VTGY), and 186–206 (LHTF…FPMI). His187 and His202 together coordinate heme b.

It belongs to the cytochrome b family. PetB subfamily. In terms of assembly, the 4 large subunits of the cytochrome b6-f complex are cytochrome b6, subunit IV (17 kDa polypeptide, PetD), cytochrome f and the Rieske protein, while the 4 small subunits are PetG, PetL, PetM and PetN. The complex functions as a dimer. The cofactor is heme b. It depends on heme c as a cofactor.

It localises to the plastid. The protein resides in the chloroplast thylakoid membrane. In terms of biological role, component of the cytochrome b6-f complex, which mediates electron transfer between photosystem II (PSII) and photosystem I (PSI), cyclic electron flow around PSI, and state transitions. In Amborella trichopoda, this protein is Cytochrome b6.